The primary structure comprises 244 residues: Chalcone--flavanone isomerase (244 aa).

The substrate site is built by Thr-57, Asn-122, and Ser-199.

It belongs to the chalcone isomerase family.

The enzyme catalyses a chalcone = a flavanone.. The protein operates within secondary metabolite biosynthesis; flavonoid biosynthesis. In terms of biological role, catalyzes the intramolecular cyclization of bicyclic chalcones into tricyclic (S)-flavanones. Responsible for the isomerization of 4,2',4',6'-tetrahydroxychalcone (also termed chalcone) into naringenin. This is Chalcone--flavanone isomerase (CHI) from Arabidopsis lyrata subsp. petraea (Northern rock-cress).